We begin with the raw amino-acid sequence, 191 residues long: Pyridoxal 5'-phosphate synthase subunit PdxT (191 aa).

L-glutamine is bound at residue 46–48; that stretch reads GES. The active-site Nucleophile is C75. L-glutamine is bound by residues R101 and 129–130; that span reads IR. Residues H165 and E167 each act as charge relay system in the active site.

This sequence belongs to the glutaminase PdxT/SNO family. In terms of assembly, in the presence of PdxS, forms a dodecamer of heterodimers. Only shows activity in the heterodimer.

The enzyme catalyses aldehydo-D-ribose 5-phosphate + D-glyceraldehyde 3-phosphate + L-glutamine = pyridoxal 5'-phosphate + L-glutamate + phosphate + 3 H2O + H(+). It carries out the reaction L-glutamine + H2O = L-glutamate + NH4(+). It functions in the pathway cofactor biosynthesis; pyridoxal 5'-phosphate biosynthesis. Catalyzes the hydrolysis of glutamine to glutamate and ammonia as part of the biosynthesis of pyridoxal 5'-phosphate. The resulting ammonia molecule is channeled to the active site of PdxS. The polypeptide is Pyridoxal 5'-phosphate synthase subunit PdxT (Staphylococcus saprophyticus subsp. saprophyticus (strain ATCC 15305 / DSM 20229 / NCIMB 8711 / NCTC 7292 / S-41)).